The sequence spans 299 residues: Somaliensene A/B synthase (299 aa).

7 helical membrane passes run 32-49, 56-72, 110-132, 153-171, 177-194, 222-241, and 247-269; these read WTTLFPATCFVLAAAVHT, TAVAVASGVLYFWLFVY, IAVRVAFPLYGWFLGVLEWALLW, LYAGIGVVAQLAAAWEIVA, AWRWIVTLTITVTLLMSV, VFLCAGFALGPLAIHHFLMA, and WWIVATDVVLGGLSLLLAFRVVL.

It belongs to the UbiA prenyltransferase family. Requires Mg(2+) as cofactor.

The protein localises to the cell membrane. The catalysed reaction is (2E,6E,10E,14E)-geranylfarnesyl diphosphate = somaliensene A + diphosphate. It catalyses the reaction (2E,6E,10E,14E)-geranylfarnesyl diphosphate = (-)-somaliensene B + diphosphate. Its pathway is secondary metabolite biosynthesis; terpenoid biosynthesis. Functionally, sesterterpene cyclase, which converts geranylfarnesyl diphosphate (GFPP) into the terpenes somaliensene A and somaliensene B. The sequence is that of Somaliensene A/B synthase from Streptomyces somaliensis (strain ATCC 33201 / DSM 40738 / JCM 12659 / KCTC 9044 / NCTC 11332 / NRRL B-12077 / IP 733).